Consider the following 196-residue polypeptide: DnaA initiator-associating protein DiaA (196 aa).

The 163-residue stretch at 34-196 folds into the SIS domain; that stretch reads MVQSLLNGNK…DNTLFPHQND (163 aa).

It belongs to the SIS family. DiaA subfamily. As to quaternary structure, homotetramer; dimer of dimers.

Its function is as follows. Required for the timely initiation of chromosomal replication via direct interactions with the DnaA initiator protein. This Pectobacterium atrosepticum (strain SCRI 1043 / ATCC BAA-672) (Erwinia carotovora subsp. atroseptica) protein is DnaA initiator-associating protein DiaA.